The primary structure comprises 94 residues: Small ribosomal subunit protein bS6 (94 aa).

This sequence belongs to the bacterial ribosomal protein bS6 family.

Functionally, binds together with bS18 to 16S ribosomal RNA. The protein is Small ribosomal subunit protein bS6 of Phytoplasma mali (strain AT).